Reading from the N-terminus, the 131-residue chain is Small ribosomal subunit protein uS8 (131 aa).

This sequence belongs to the universal ribosomal protein uS8 family. Part of the 30S ribosomal subunit. Contacts proteins S5 and S12.

Its function is as follows. One of the primary rRNA binding proteins, it binds directly to 16S rRNA central domain where it helps coordinate assembly of the platform of the 30S subunit. The sequence is that of Small ribosomal subunit protein uS8 from Bordetella avium (strain 197N).